A 602-amino-acid chain; its full sequence is Glutamine--fructose-6-phosphate aminotransferase [isomerizing] (602 aa).

The active-site Nucleophile; for GATase activity is cysteine 2. One can recognise a Glutamine amidotransferase type-2 domain in the interval 2-217; the sequence is CGIVGVVGNT…DQELVIVKAD (216 aa). The disordered stretch occupies residues 67–87; that stretch reads IGHTRWATHGKPTEDNAHPHR. The segment covering 77 to 87 has biased composition (basic and acidic residues); that stretch reads KPTEDNAHPHR. SIS domains are found at residues 283–422 and 455–592; these read IIKA…ANGN and VREL…VDKP. The For Fru-6P isomerization activity role is filled by lysine 597.

Homodimer.

Its subcellular location is the cytoplasm. The enzyme catalyses D-fructose 6-phosphate + L-glutamine = D-glucosamine 6-phosphate + L-glutamate. Catalyzes the first step in hexosamine metabolism, converting fructose-6P into glucosamine-6P using glutamine as a nitrogen source. The protein is Glutamine--fructose-6-phosphate aminotransferase [isomerizing] of Streptococcus pneumoniae (strain ATCC BAA-255 / R6).